A 445-amino-acid polypeptide reads, in one-letter code: UDP-N-acetylmuramoylalanine--D-glutamate ligase (445 aa).

Gly117 to Thr123 lines the ATP pocket.

This sequence belongs to the MurCDEF family.

It is found in the cytoplasm. The enzyme catalyses UDP-N-acetyl-alpha-D-muramoyl-L-alanine + D-glutamate + ATP = UDP-N-acetyl-alpha-D-muramoyl-L-alanyl-D-glutamate + ADP + phosphate + H(+). It functions in the pathway cell wall biogenesis; peptidoglycan biosynthesis. Its function is as follows. Cell wall formation. Catalyzes the addition of glutamate to the nucleotide precursor UDP-N-acetylmuramoyl-L-alanine (UMA). The protein is UDP-N-acetylmuramoylalanine--D-glutamate ligase of Neisseria gonorrhoeae (strain NCCP11945).